Here is a 527-residue protein sequence, read N- to C-terminus: MNLTNFPWLTAIILFPIVAALLVPIIPDKDGKTVRWFALTVGLIDFALIIYAFYSSYDFANPNLQLVESYQWLPEIDLRWSLGADGLSMPLIILTGFITTLAILAAWPVTFKPKLFYFLMLLMYGGQIAVFAVQDLLLFFLVWELELVPVYLILSIWGGKRRLYAATKFILYTAGGSLFILVAALTMAFYGDTVSFDMVTIAGKDFPLKLQLFLYAGFLIAYGVKLPIFPLHTWLPDAHGEATAPAHMLLAGILLKMGGYALLRMNMGMLPDAHAVFAPVLVILGVVNIIYAALTSFAQRNLKRKIAYSSISHMGFVLIGMASFTDIGTSGAMLQMISHGLIGASLFFMVGCTYDRTHTLMLDEMGGVGKKMKKVFAMWTTCSLASLALPGMSGFVAELMVFIGFATSDAYSPTFRVIIVFLAAIGVILTPIYLLSMLREILYGPENKELEEHHALVDAEPREVFIIASLLVPIIGIGLYPKVATTIYDATTNKLTALVRNSVPSLVQQAKAKTPSFSLYSLKAPEI.

Transmembrane regions (helical) follow at residues 6–26 (FPWL…VPII), 36–56 (WFAL…FYSS), 91–111 (LIIL…PVTF), 113–133 (PKLF…VFAV), 136–156 (LLLF…ILSI), 169–189 (FILY…TMAF), 212–232 (LFLY…FPLH), 243–263 (TAPA…YALL), 275–295 (AVFA…AALT), 306–326 (IAYS…SFTD), 331–351 (GAML…FMVG), 387–407 (LALP…GFAT), and 417–437 (VIIV…LLSM).

It belongs to the complex I subunit 4 family.

The protein localises to the cellular thylakoid membrane. The catalysed reaction is a plastoquinone + NADH + (n+1) H(+)(in) = a plastoquinol + NAD(+) + n H(+)(out). It catalyses the reaction a plastoquinone + NADPH + (n+1) H(+)(in) = a plastoquinol + NADP(+) + n H(+)(out). In terms of biological role, NDH-1 shuttles electrons from NAD(P)H, via FMN and iron-sulfur (Fe-S) centers, to quinones in the respiratory chain. The immediate electron acceptor for the enzyme in this species is believed to be plastoquinone. Couples the redox reaction to proton translocation (for every two electrons transferred, four hydrogen ions are translocated across the cytoplasmic membrane), and thus conserves the redox energy in a proton gradient. This chain is NAD(P)H-quinone oxidoreductase chain 4 1, found in Microcystis aeruginosa (strain NIES-843 / IAM M-2473).